Consider the following 434-residue polypeptide: Glutamyl-tRNA reductase (434 aa).

Residues threonine 57–arginine 60, serine 116, glutamate 121–glutamine 123, and glutamine 127 contribute to the substrate site. Residue cysteine 58 is the Nucleophile of the active site. Position 196 to 201 (glycine 196 to isoleucine 201) interacts with NADP(+).

This sequence belongs to the glutamyl-tRNA reductase family. As to quaternary structure, homodimer.

The catalysed reaction is (S)-4-amino-5-oxopentanoate + tRNA(Glu) + NADP(+) = L-glutamyl-tRNA(Glu) + NADPH + H(+). The protein operates within porphyrin-containing compound metabolism; protoporphyrin-IX biosynthesis; 5-aminolevulinate from L-glutamyl-tRNA(Glu): step 1/2. In terms of biological role, catalyzes the NADPH-dependent reduction of glutamyl-tRNA(Glu) to glutamate 1-semialdehyde (GSA). The protein is Glutamyl-tRNA reductase of Burkholderia pseudomallei (strain 1106a).